The following is a 165-amino-acid chain: MEQPLPTAAAEAAAAGGDGEAYRIRPLELADISRGFLGLLNQLSPSPPLTEEAFRARFEELAALGADHLVLVAEDAATGRLAAAGAVLVERKFIRRCGRVGHVEDVVVDAAARGRGLGERVVRRLVEHARGRGCYKVIINCTPELTGFYAKCGFVEKNVQMGLYF.

One can recognise an N-acetyltransferase domain in the interval 22-165 (YRIRPLELAD…EKNVQMGLYF (144 aa)). Residues S44, 92-95 (KFIR), and 104-106 (EDV) contribute to the substrate site. 114 to 119 (GRGLGE) is a binding site for acetyl-CoA. 135–136 (YK) serves as a coordination point for substrate. Position 149–151 (149–151 (YAK)) interacts with acetyl-CoA.

This sequence belongs to the acetyltransferase family. GNA1 subfamily. In terms of assembly, homodimer. In terms of tissue distribution, highly expressed in the root elongation zone and at lower levels in leaves and grains.

The protein resides in the endoplasmic reticulum membrane. The enzyme catalyses D-glucosamine 6-phosphate + acetyl-CoA = N-acetyl-D-glucosamine 6-phosphate + CoA + H(+). Its pathway is nucleotide-sugar biosynthesis; UDP-N-acetyl-alpha-D-glucosamine biosynthesis; N-acetyl-alpha-D-glucosamine 1-phosphate from alpha-D-glucosamine 6-phosphate (route I): step 1/2. Functionally, acetyltransferase involved in de novo biosynthesis of UDP-N-acetylglucosamine (UDP-GlcNAc) in roots and is required for maintaining normal root cell shape. UDP-GlcNAc is an essential metabolite that serves as an initial sugar donor for N-glycan synthesis and thus plays an important role in protein and lipid glycosylation. This Oryza sativa subsp. japonica (Rice) protein is Glucosamine 6-phosphate N-acetyltransferase 1 (GNA1).